The primary structure comprises 384 residues: Cytochrome b (384 aa).

4 consecutive transmembrane segments (helical) span residues 32 to 52 (FGSL…FLAM), 76 to 98 (WLLR…LHMA), 113 to 133 (LWNM…MGYC), and 179 to 199 (FFSL…LHLL). H82 and H96 together coordinate heme b. Heme b contacts are provided by H183 and H197. H202 provides a ligand contact to a ubiquinone. 4 helical membrane passes run 225–245 (FLFK…FLIS), 289–309 (MMGV…PFVD), 321–341 (LSKI…LIGA), and 348–368 (YIII…ILLP).

This sequence belongs to the cytochrome b family. Fungal cytochrome b-c1 complex contains 10 subunits; 3 respiratory subunits, 2 core proteins and 5 low-molecular weight proteins. Cytochrome b-c1 complex is a homodimer. The cofactor is heme b.

It is found in the mitochondrion inner membrane. In terms of biological role, component of the ubiquinol-cytochrome c reductase complex (complex III or cytochrome b-c1 complex) that is part of the mitochondrial respiratory chain. The b-c1 complex mediates electron transfer from ubiquinol to cytochrome c. Contributes to the generation of a proton gradient across the mitochondrial membrane that is then used for ATP synthesis. This chain is Cytochrome b (COB), found in Starmerella bacillaris (Yeast).